A 302-amino-acid chain; its full sequence is Aliphatic sulfonates import ATP-binding protein SsuB (302 aa).

The span at 30-57 (PATADAQHTADAQHTADAQHTADAQHTA) shows a compositional bias: low complexity. Positions 30-65 (PATADAQHTADAQHTADAQHTADAQHTAETAETRGA) are disordered. The 215-residue stretch at 70–284 (IRIRGLRRTF…RRTDPAFDRL (215 aa)) folds into the ABC transporter domain. An ATP-binding site is contributed by 102-109 (GRSGSGKS).

The protein belongs to the ABC transporter superfamily. Aliphatic sulfonates importer (TC 3.A.1.17.2) family. In terms of assembly, the complex is composed of two ATP-binding proteins (SsuB), two transmembrane proteins (SsuC) and a solute-binding protein (SsuA).

Its subcellular location is the cell membrane. The catalysed reaction is ATP + H2O + aliphatic sulfonate-[sulfonate-binding protein]Side 1 = ADP + phosphate + aliphatic sulfonateSide 2 + [sulfonate-binding protein]Side 1.. In terms of biological role, part of the ABC transporter complex SsuABC involved in aliphatic sulfonates import. Responsible for energy coupling to the transport system. This Frankia casuarinae (strain DSM 45818 / CECT 9043 / HFP020203 / CcI3) protein is Aliphatic sulfonates import ATP-binding protein SsuB.